We begin with the raw amino-acid sequence, 341 residues long: Ketol-acid reductoisomerase (NADP(+)) (341 aa).

Residues 2-181 enclose the KARI N-terminal Rossmann domain; sequence VKVYYNGDAN…GSARAGVIET (180 aa). NADP(+)-binding positions include 25–28, arginine 48, serine 52, and 82–85; these read YGSQ and DEHQ. Histidine 107 is a catalytic residue. Glycine 133 contacts NADP(+). Residues 182 to 327 form the KARI C-terminal knotted domain; the sequence is TFKEETETDL…RELRKMMPFV (146 aa). Positions 190, 194, 226, and 230 each coordinate Mg(2+). Serine 251 lines the substrate pocket.

Belongs to the ketol-acid reductoisomerase family. It depends on Mg(2+) as a cofactor.

The enzyme catalyses (2R)-2,3-dihydroxy-3-methylbutanoate + NADP(+) = (2S)-2-acetolactate + NADPH + H(+). It catalyses the reaction (2R,3R)-2,3-dihydroxy-3-methylpentanoate + NADP(+) = (S)-2-ethyl-2-hydroxy-3-oxobutanoate + NADPH + H(+). It functions in the pathway amino-acid biosynthesis; L-isoleucine biosynthesis; L-isoleucine from 2-oxobutanoate: step 2/4. The protein operates within amino-acid biosynthesis; L-valine biosynthesis; L-valine from pyruvate: step 2/4. Involved in the biosynthesis of branched-chain amino acids (BCAA). Catalyzes an alkyl-migration followed by a ketol-acid reduction of (S)-2-acetolactate (S2AL) to yield (R)-2,3-dihydroxy-isovalerate. In the isomerase reaction, S2AL is rearranged via a Mg-dependent methyl migration to produce 3-hydroxy-3-methyl-2-ketobutyrate (HMKB). In the reductase reaction, this 2-ketoacid undergoes a metal-dependent reduction by NADPH to yield (R)-2,3-dihydroxy-isovalerate. The sequence is that of Ketol-acid reductoisomerase (NADP(+)) from Anoxybacillus flavithermus (strain DSM 21510 / WK1).